The sequence spans 261 residues: Phosphate import ATP-binding protein PstB 4 (261 aa).

The 249-residue stretch at I8–V256 folds into the ABC transporter domain. Residue G40–S47 participates in ATP binding.

This sequence belongs to the ABC transporter superfamily. Phosphate importer (TC 3.A.1.7) family. The complex is composed of two ATP-binding proteins (PstB), two transmembrane proteins (PstC and PstA) and a solute-binding protein (PstS).

It is found in the cell inner membrane. It carries out the reaction phosphate(out) + ATP + H2O = ADP + 2 phosphate(in) + H(+). Part of the ABC transporter complex PstSACB involved in phosphate import. Responsible for energy coupling to the transport system. The protein is Phosphate import ATP-binding protein PstB 4 of Trichormus variabilis (strain ATCC 29413 / PCC 7937) (Anabaena variabilis).